Consider the following 619-residue polypeptide: Low-temperature-induced 65 kDa protein (619 aa).

2 disordered regions span residues 1-383 (MESQ…STYT) and 408-429 (LGYT…ETPR). The span at 9 to 33 (YGHEQAEEPIRIHHPEEEEHHEKGA) shows a compositional bias: basic and acidic residues. The span at 36-48 (VLKKVKEKAKKIK) shows a compositional bias: basic residues. Residues 62 to 73 (VEDDDDEYDEQD) are compositionally biased toward acidic residues. Over residues 175–186 (FSDRGESREAHQ) the composition is skewed to basic and acidic residues. The span at 188 to 197 (PLNTPVSLLS) shows a compositional bias: polar residues. The span at 221–231 (VNVETPKRLEE) shows a compositional bias: basic and acidic residues. Positions 245-254 (GVSNYQSKVT) are enriched in polar residues. Composition is skewed to basic and acidic residues over residues 276–309 (KVTD…ESDI) and 323–337 (AGME…DVKV). 5 consecutive repeat copies span residues 404–408 (VASKL), 442–446 (VAEKL), 460–464 (VMTKL), 490–494 (ISEKL), and 507–511 (IAEKL). Residues 404 to 511 (VASKLGYTGE…ALSEMIAEKL (108 aa)) are 5 X 5 AA repeats of [IV]-[AMS]-[EST]-K-L. The segment at 461–485 (MTKLPLSGGGSGVKETQQGEEKGVT) is disordered. The residue at position 536 (serine 536) is a Phosphoserine. A compositionally biased stretch (basic and acidic residues) spans 537–555 (DQIAEGKGHGEAVAEEGKG). Residues 537-619 (DQIAEGKGHG…GGKGVQDSGN (83 aa)) are disordered. Over residues 583–593 (ESPQSLGTTVG) the composition is skewed to polar residues. The segment covering 603 to 613 (SELGGSGGGKG) has biased composition (gly residues).

Belongs to the LTI78/LTI65 family.

This Arabidopsis thaliana (Mouse-ear cress) protein is Low-temperature-induced 65 kDa protein (LTI65).